A 1641-amino-acid polypeptide reads, in one-letter code: Ophiophagus venom factor (1641 aa).

A signal peptide spans 1 to 22 (MEGMALYLVAALLIGFPGSSHG). N-linked (GlcNAc...) asparagine glycans are attached at residues asparagine 181 and asparagine 209. Mg(2+) contacts are provided by proline 507, aspartate 530, valine 531, and aspartate 533. Cystine bridges form between cysteine 535–cysteine 796, cysteine 604–cysteine 639, cysteine 672–cysteine 699, cysteine 673–cysteine 706, cysteine 686–cysteine 707, cysteine 852–cysteine 1491, cysteine 1336–cysteine 1467, cysteine 1367–cysteine 1436, cysteine 1484–cysteine 1489, cysteine 1496–cysteine 1568, cysteine 1515–cysteine 1639, and cysteine 1615–cysteine 1624. Residues 645-728 (RRRRSSVLLL…WESGLFLPRN (84 aa)) constitute a propeptide that is removed on maturation. The C3a-like domain stretch occupies residues 649–727 (SSVLLLDSKA…QWESGLFLPR (79 aa)). The Anaphylatoxin-like domain maps to 672–707 (CCEDSMHENPMGYTCEKRAKYIQEGDACKAAFLECC). Residues 731–742 (EDGFIQDSDIIP) form a factor B binding site region. The propeptide occupies 981-1259 (HLIITPSGCG…VMLFQALAEY (279 aa)). Residues 981–1259 (HLIITPSGCG…VMLFQALAEY (279 aa)) form a C3d-like domain region. A cross-link (isoglutamyl cysteine thioester (Cys-Gln)) is located at residues 989 to 992 (CGEQ). The tract at residues 1186-1249 (VLMAASTGKN…GGTYGQTQAT (64 aa)) is factor H binding site. In terms of domain architecture, NTR spans 1496-1639 (CSLLSQQEKI…LSNILTIFGC (144 aa)).

Belongs to the venom complement C3 homolog family. Heterotrimer of alpha, beta and gamma chains; disulfide-linked. May be active with factor B in the presence of factor D. First processed by the removal of 4 Arg residues by furin-type protease, forming two chains, alpha and gamma/beta precursor, linked by a disulfide bond. Probably, a cobrin-like protease cleaves the C3a-like domain and then the C3d-like domain, generating the mature venom factor (OVF). Post-translationally, the beta chain is not glycosylated. Expressed by the venom gland.

It is found in the secreted. Complement-activating protein in cobra venom. It is a structural and functional analog of complement component C3b, the activated form of C3. It binds factor B (CFB), which is subsequently cleaved by factor D (CFD) to form the bimolecular complex OVF/Bb. OVF/Bb is a C3/C5 convertase that cleaves both complement components C3 and C5. Structurally, it resembles the C3b degradation product C3c, which is not able to form a C3/C5 convertase. Unlike C3b/Bb, OVF/Bb is a stable complex and completely resistant to the actions of complement regulatory factors H (CFH) and I (CFI). Therefore, OVF continuously activates complement. As a result, OVF exhibits complement-depleting activity. This chain is Ophiophagus venom factor, found in Ophiophagus hannah (King cobra).